The chain runs to 213 residues: Large ribosomal subunit protein uL3 (213 aa).

The protein belongs to the universal ribosomal protein uL3 family. As to quaternary structure, part of the 50S ribosomal subunit. Forms a cluster with proteins L14 and L19.

Functionally, one of the primary rRNA binding proteins, it binds directly near the 3'-end of the 23S rRNA, where it nucleates assembly of the 50S subunit. The sequence is that of Large ribosomal subunit protein uL3 from Bifidobacterium longum subsp. infantis (strain ATCC 15697 / DSM 20088 / JCM 1222 / NCTC 11817 / S12).